A 295-amino-acid polypeptide reads, in one-letter code: Septu protein PtuB (295 aa).

Functionally, component of antiviral defense system Septu type II, composed of PtuA and PtuB. Expression of Septu type II in B.subtilis (strain BEST7003) confers resistance to phages SBSphiC and SpBeta. May be a nuclease. This Bacillus mycoides (strain KBAB4) (Bacillus weihenstephanensis) protein is Septu protein PtuB.